The primary structure comprises 235 residues: Acyl-protein thioesterase 1 (235 aa).

Residues Ser-119, Asp-172, and His-206 each act as charge relay system in the active site.

The protein belongs to the AB hydrolase superfamily. AB hydrolase 2 family.

It is found in the cytoplasm. It localises to the nucleus. It carries out the reaction S-hexadecanoyl-L-cysteinyl-[protein] + H2O = L-cysteinyl-[protein] + hexadecanoate + H(+). Hydrolyzes fatty acids from S-acylated cysteine residues in proteins with a strong preference for palmitoylated G-alpha proteins over other acyl substrates. Mediates the deacylation of G-alpha proteins such as GPA1 in vivo, but has weak or no activity toward palmitoylated Ras proteins. Has weak lysophospholipase activity in vitro; however such activity may not exist in vivo. This Eremothecium gossypii (strain ATCC 10895 / CBS 109.51 / FGSC 9923 / NRRL Y-1056) (Yeast) protein is Acyl-protein thioesterase 1.